We begin with the raw amino-acid sequence, 251 residues long: NADPH-dependent oxidoreductase (251 aa).

It belongs to the flavin oxidoreductase frp family. FMN serves as cofactor.

Its function is as follows. Reduces FMN, organic nitro compounds and disulfide DTNB. Involved in maintenance of the cellular redox state and the disulfide stress response. In Staphylococcus haemolyticus (strain JCSC1435), this protein is NADPH-dependent oxidoreductase (nfrA).